A 704-amino-acid polypeptide reads, in one-letter code: Ion-translocating oxidoreductase complex subunit C (704 aa).

2 consecutive 4Fe-4S ferredoxin-type domains span residues 368-397 (MGAPQEEKSCIRCSACADACPADLLPQQLY) and 407-436 (KATAHHIADCIECGACAWVCPSNIPLVQYF). [4Fe-4S] cluster contacts are provided by cysteine 377, cysteine 380, cysteine 383, cysteine 387, cysteine 416, cysteine 419, cysteine 422, and cysteine 426. The disordered stretch occupies residues 534–682 (QARAKQAAHP…AEPADPRKAA (149 aa)).

Belongs to the 4Fe4S bacterial-type ferredoxin family. RnfC subfamily. As to quaternary structure, the complex is composed of six subunits: RsxA, RsxB, RsxC, RsxD, RsxE and RsxG. [4Fe-4S] cluster is required as a cofactor.

Its subcellular location is the cell inner membrane. Part of a membrane-bound complex that couples electron transfer with translocation of ions across the membrane. Required to maintain the reduced state of SoxR. This Salmonella enteritidis PT4 (strain P125109) protein is Ion-translocating oxidoreductase complex subunit C.